Consider the following 173-residue polypeptide: Shikimate kinase (173 aa).

Position 12-17 (12-17 (GSGKTT)) interacts with ATP. Residue Thr16 coordinates Mg(2+). Substrate contacts are provided by Asp34, Arg58, and Gly80. Arg118 provides a ligand contact to ATP. Arg136 provides a ligand contact to substrate.

It belongs to the shikimate kinase family. As to quaternary structure, monomer. Mg(2+) serves as cofactor.

It is found in the cytoplasm. The catalysed reaction is shikimate + ATP = 3-phosphoshikimate + ADP + H(+). It functions in the pathway metabolic intermediate biosynthesis; chorismate biosynthesis; chorismate from D-erythrose 4-phosphate and phosphoenolpyruvate: step 5/7. In terms of biological role, catalyzes the specific phosphorylation of the 3-hydroxyl group of shikimic acid using ATP as a cosubstrate. This Moorella thermoacetica (strain ATCC 39073 / JCM 9320) protein is Shikimate kinase.